A 428-amino-acid chain; its full sequence is Elongation factor 1-alpha (428 aa).

Residues 5-215 form the tr-type G domain; that stretch reads KPHVNIVFIG…ALDQIPEPPK (211 aa). The interval 14–21 is G1; sequence GHVDHGKS. 14 to 21 lines the GTP pocket; that stretch reads GHVDHGKS. A Mg(2+)-binding site is contributed by serine 21. The G2 stretch occupies residues 68–72; the sequence is GITID. The segment at 89–92 is G3; it reads DAPG. GTP contacts are provided by residues 89–93 and 144–147; these read DAPGH and NKMD. The segment at 144-147 is G4; it reads NKMD. Positions 181–183 are G5; that stretch reads SAW.

Belongs to the TRAFAC class translation factor GTPase superfamily. Classic translation factor GTPase family. EF-Tu/EF-1A subfamily.

The protein resides in the cytoplasm. The catalysed reaction is GTP + H2O = GDP + phosphate + H(+). GTP hydrolase that promotes the GTP-dependent binding of aminoacyl-tRNA to the A-site of ribosomes during protein biosynthesis. The sequence is that of Elongation factor 1-alpha from Thermococcus onnurineus (strain NA1).